A 286-amino-acid polypeptide reads, in one-letter code: Shikimate dehydrogenase (NADP(+)) (286 aa).

Residues 20–22 (SLS) and S67 contribute to the shikimate site. The active-site Proton acceptor is the K71. 2 residues coordinate shikimate: N92 and D107. Residues 131–135 (GGGGA) and A230 contribute to the NADP(+) site. A shikimate-binding site is contributed by Y232. Residue G253 participates in NADP(+) binding.

This sequence belongs to the shikimate dehydrogenase family. Homodimer.

The catalysed reaction is shikimate + NADP(+) = 3-dehydroshikimate + NADPH + H(+). The protein operates within metabolic intermediate biosynthesis; chorismate biosynthesis; chorismate from D-erythrose 4-phosphate and phosphoenolpyruvate: step 4/7. Its function is as follows. Involved in the biosynthesis of the chorismate, which leads to the biosynthesis of aromatic amino acids. Catalyzes the reversible NADPH linked reduction of 3-dehydroshikimate (DHSA) to yield shikimate (SA). This chain is Shikimate dehydrogenase (NADP(+)), found in Lactococcus lactis subsp. lactis (strain IL1403) (Streptococcus lactis).